The chain runs to 192 residues: Ion-translocating oxidoreductase complex subunit B (192 aa).

A hydrophobic region spans residues 1–26; that stretch reads MNAFWIAVAAVSLLGLAFGAILGYAS. Residues 32 to 91 enclose the 4Fe-4S domain; the sequence is EDDPVVEKIDEILPQSQCGQCGYPGCRPYAEAISCNGEKINRCAPGGEAVMLKIAELLNV. Residues Cys-49, Cys-52, Cys-57, Cys-74, Cys-117, Cys-120, Cys-123, Cys-127, Cys-147, Cys-150, Cys-153, and Cys-157 each contribute to the [4Fe-4S] cluster site. 4Fe-4S ferredoxin-type domains lie at 108-137 and 138-167; these read MVAVIDENNCIGCTKCIQACPVDAIVGATR and AMHTVMSDLCTGCNLCVDPCPTHCISLQPV.

Belongs to the 4Fe4S bacterial-type ferredoxin family. RnfB subfamily. In terms of assembly, the complex is composed of six subunits: RsxA, RsxB, RsxC, RsxD, RsxE and RsxG. Requires [4Fe-4S] cluster as cofactor.

It localises to the cell inner membrane. Part of a membrane-bound complex that couples electron transfer with translocation of ions across the membrane. Required to maintain the reduced state of SoxR. This chain is Ion-translocating oxidoreductase complex subunit B, found in Escherichia coli O6:H1 (strain CFT073 / ATCC 700928 / UPEC).